Here is a 397-residue protein sequence, read N- to C-terminus: L-asparaginase-like protein GD25160 (397 aa).

An N-terminal signal peptide occupies residues 1-22 (MLAQSCCLRLLILLLLFTSICS). Intrachain disulfides connect C90/C95, C189/C205, and C344/C371.

It belongs to the Ntn-hydrolase family.

The protein is L-asparaginase-like protein GD25160 of Drosophila simulans (Fruit fly).